The chain runs to 504 residues: Maturase K (504 aa).

Belongs to the intron maturase 2 family. MatK subfamily.

It is found in the plastid. The protein resides in the chloroplast. Functionally, usually encoded in the trnK tRNA gene intron. Probably assists in splicing its own and other chloroplast group II introns. In Quercus cerris (Turkey oak), this protein is Maturase K.